Reading from the N-terminus, the 923-residue chain is Protein translocase subunit SecA (923 aa).

Residues Gln-86, 104 to 108 (GEGKT), and Asp-512 each bind ATP. Positions 906, 908, 917, and 918 each coordinate Zn(2+).

This sequence belongs to the SecA family. Monomer and homodimer. Part of the essential Sec protein translocation apparatus which comprises SecA, SecYEG and auxiliary proteins SecDF-YajC and YidC. It depends on Zn(2+) as a cofactor.

Its subcellular location is the cell inner membrane. The protein resides in the cytoplasm. It carries out the reaction ATP + H2O + cellular proteinSide 1 = ADP + phosphate + cellular proteinSide 2.. Part of the Sec protein translocase complex. Interacts with the SecYEG preprotein conducting channel. Has a central role in coupling the hydrolysis of ATP to the transfer of proteins into and across the cell membrane, serving both as a receptor for the preprotein-SecB complex and as an ATP-driven molecular motor driving the stepwise translocation of polypeptide chains across the membrane. This Caulobacter vibrioides (strain ATCC 19089 / CIP 103742 / CB 15) (Caulobacter crescentus) protein is Protein translocase subunit SecA.